Consider the following 80-residue polypeptide: Regulatory protein HrpD6 (80 aa).

Involved in the regulation of several genes of the hrp-hrc-hpa cluster, which encodes a type III secretion system (T3SS). Upregulates the expression of hpa2, hpa1 and hpaB and partially controls the expression of hrcC and hrcT. Controls the secretion of the T3SS TAL effector AvrXa27. Also regulates the expression of several HrpX-regulated protein (Xrp) genes. Has no influence on hrpG or hrpX expression. The polypeptide is Regulatory protein HrpD6 (Xanthomonas oryzae pv. oryzicola).